A 244-amino-acid polypeptide reads, in one-letter code: uncharacterized protein (244 aa).

2 stretches are compositionally biased toward basic and acidic residues: residues 1 to 10 (MNDPFARMET) and 100 to 127 (GTRGDPAREEVAGAEDLPHAGGEDHGEE). 3 disordered regions span residues 1-79 (MNDP…GEEL), 100-130 (GTRGDPAREEVAGAEDLPHAGGEDHGEEPNY), and 219-244 (TGASRVHAAGRRVSPSPGTWLEEIKL).

This is an uncharacterized protein from Homo sapiens (Human).